We begin with the raw amino-acid sequence, 240 residues long: Methylthioribulose-1-phosphate dehydratase (240 aa).

Substrate is bound at residue Cys103. Positions 121 and 123 each coordinate Zn(2+). The active-site Proton donor/acceptor is the Glu144. His200 contributes to the Zn(2+) binding site.

The protein belongs to the aldolase class II family. MtnB subfamily. Zn(2+) is required as a cofactor.

The protein resides in the cytoplasm. The catalysed reaction is 5-(methylsulfanyl)-D-ribulose 1-phosphate = 5-methylsulfanyl-2,3-dioxopentyl phosphate + H2O. It participates in amino-acid biosynthesis; L-methionine biosynthesis via salvage pathway; L-methionine from S-methyl-5-thio-alpha-D-ribose 1-phosphate: step 2/6. Functionally, catalyzes the dehydration of methylthioribulose-1-phosphate (MTRu-1-P) into 2,3-diketo-5-methylthiopentyl-1-phosphate (DK-MTP-1-P). The polypeptide is Methylthioribulose-1-phosphate dehydratase (Komagataella phaffii (strain GS115 / ATCC 20864) (Yeast)).